The sequence spans 322 residues: Fructose-1,6-bisphosphatase class 1 1 (322 aa).

Mg(2+) is bound by residues Glu84, Asp103, Leu105, and Asp106. Substrate contacts are provided by residues 106 to 109 (DGSS), Asn198, and Lys264. Residue Glu270 coordinates Mg(2+).

This sequence belongs to the FBPase class 1 family. In terms of assembly, homotetramer. Mg(2+) serves as cofactor.

The protein resides in the cytoplasm. It catalyses the reaction beta-D-fructose 1,6-bisphosphate + H2O = beta-D-fructose 6-phosphate + phosphate. It functions in the pathway carbohydrate biosynthesis; gluconeogenesis. The chain is Fructose-1,6-bisphosphatase class 1 1 from Pseudoalteromonas translucida (strain TAC 125).